The sequence spans 239 residues: 3,4-dihydroxyphthalate decarboxylase (239 aa).

The Proton donor/acceptor role is filled by E84. Residues E84, H103, H105, and H171 each contribute to the a divalent metal cation site.

Belongs to the aldolase class II family. It depends on a divalent metal cation as a cofactor.

It catalyses the reaction 3,4-dihydroxyphthalate + H(+) = 3,4-dihydroxybenzoate + CO2. It participates in xenobiotic degradation; phthalate degradation. Its function is as follows. Catalyzes the decarboxylation of 3,4-dihydroxyphthalate to protocatechuate (3,4-dihydroxybenzoate) during phthalate metabolism. This chain is 3,4-dihydroxyphthalate decarboxylase, found in Terrabacter sp. (strain DBF63).